The sequence spans 254 residues: Pyridoxine 5'-phosphate synthase (254 aa).

Asparagine 8 lines the 3-amino-2-oxopropyl phosphate pocket. 10–11 is a binding site for 1-deoxy-D-xylulose 5-phosphate; that stretch reads DH. Arginine 19 lines the 3-amino-2-oxopropyl phosphate pocket. Histidine 44 (proton acceptor) is an active-site residue. Arginine 46 and histidine 51 together coordinate 1-deoxy-D-xylulose 5-phosphate. Glutamate 74 serves as the catalytic Proton acceptor. A 1-deoxy-D-xylulose 5-phosphate-binding site is contributed by threonine 104. The active-site Proton donor is the histidine 198. 3-amino-2-oxopropyl phosphate is bound by residues glycine 199 and 220–221; that span reads GH.

This sequence belongs to the PNP synthase family. In terms of assembly, homooctamer; tetramer of dimers.

The protein resides in the cytoplasm. It catalyses the reaction 3-amino-2-oxopropyl phosphate + 1-deoxy-D-xylulose 5-phosphate = pyridoxine 5'-phosphate + phosphate + 2 H2O + H(+). Its pathway is cofactor biosynthesis; pyridoxine 5'-phosphate biosynthesis; pyridoxine 5'-phosphate from D-erythrose 4-phosphate: step 5/5. In terms of biological role, catalyzes the complicated ring closure reaction between the two acyclic compounds 1-deoxy-D-xylulose-5-phosphate (DXP) and 3-amino-2-oxopropyl phosphate (1-amino-acetone-3-phosphate or AAP) to form pyridoxine 5'-phosphate (PNP) and inorganic phosphate. The protein is Pyridoxine 5'-phosphate synthase of Caulobacter vibrioides (strain ATCC 19089 / CIP 103742 / CB 15) (Caulobacter crescentus).